The chain runs to 1215 residues: Kinesin-like protein KIN-7I (1215 aa).

The Kinesin motor domain maps to 3 to 327 (RIHVAVRARP…LQFASRALRV (325 aa)). An ATP-binding site is contributed by 79 to 86 (GQTNSGKT). 4 coiled-coil regions span residues 333–414 (VNEI…IENL), 571–646 (ESEA…AAYE), 708–855 (IRDY…KRDS), and 894–979 (DMEA…KEDM).

This sequence belongs to the TRAFAC class myosin-kinesin ATPase superfamily. Kinesin family. KIN-7 subfamily.

In Oryza sativa subsp. japonica (Rice), this protein is Kinesin-like protein KIN-7I.